Reading from the N-terminus, the 265-residue chain is Methyl-coenzyme M reductase II subunit gamma (265 aa).

Arg-123 is a coenzyme M binding site.

The protein belongs to the methyl-coenzyme M reductase gamma subunit family. MCR is a hexamer of two alpha, two beta, and two gamma chains, forming a dimer of heterotrimers. The cofactor is coenzyme F430.

It catalyses the reaction coenzyme B + methyl-coenzyme M = methane + coenzyme M-coenzyme B heterodisulfide. It participates in one-carbon metabolism; methyl-coenzyme M reduction; methane from methyl-coenzyme M: step 1/1. Functionally, component of the methyl-coenzyme M reductase (MCR) I that catalyzes the reductive cleavage of methyl-coenzyme M (CoM-S-CH3 or 2-(methylthio)ethanesulfonate) using coenzyme B (CoB or 7-mercaptoheptanoylthreonine phosphate) as reductant which results in the production of methane and the mixed heterodisulfide of CoB and CoM (CoM-S-S-CoB). This is the final step in methanogenesis. The polypeptide is Methyl-coenzyme M reductase II subunit gamma (mrtG) (Methanothermobacter thermautotrophicus (strain ATCC 29096 / DSM 1053 / JCM 10044 / NBRC 100330 / Delta H) (Methanobacterium thermoautotrophicum)).